A 164-amino-acid polypeptide reads, in one-letter code: Cytochrome c-type biogenesis protein CcmE (164 aa).

At M1 to R8 the chain is on the cytoplasmic side. A helical; Signal-anchor for type II membrane protein membrane pass occupies residues L9–A29. At L30–L164 the chain is on the periplasmic side. Heme contacts are provided by H130 and Y134. The tract at residues E140 to L164 is disordered.

This sequence belongs to the CcmE/CycJ family.

The protein localises to the cell inner membrane. Its function is as follows. Heme chaperone required for the biogenesis of c-type cytochromes. Transiently binds heme delivered by CcmC and transfers the heme to apo-cytochromes in a process facilitated by CcmF and CcmH. The polypeptide is Cytochrome c-type biogenesis protein CcmE (Yersinia pseudotuberculosis serotype O:3 (strain YPIII)).